Consider the following 551-residue polypeptide: Putative transport protein CGSHiEE_03135 (551 aa).

5 consecutive transmembrane segments (helical) span residues 4-24 (IAITISLLALVAVIGLWIGHW), 28-48 (GVGLGIGGVLFGGIIVAHFTD), 65-85 (FGLILFVYTIGIQVGPGFFSS), 95-115 (AFAILIIVLGSIAVVLVHKIA), and 157-177 (VSYAMAYPFGICGILLAMWLI). 2 RCK C-terminal domains span residues 191-275 (RFNA…IIGY) and 277-360 (VDAP…VIGN). The next 6 membrane-spanning stretches (helical) occupy residues 370–390 (MLPVFIGIGLGVLVGSIPFYI), 402–424 (AGGPLVVVLILARIGTIGKLYWF), 438–458 (IVLFLAVVGLKSGGSFFDTLV), 463–483 (LEWMGYGIFITFVPLIIAGTI), 492–512 (YLTICGLLAGSMTDPPALAFA), and 529–549 (VYPLVMFLRIMSPQLLAVLLW).

This sequence belongs to the AAE transporter (TC 2.A.81) family. YidE subfamily.

It localises to the cell membrane. This Haemophilus influenzae (strain PittEE) protein is Putative transport protein CGSHiEE_03135.